The following is a 453-amino-acid chain: GTPase Der (453 aa).

EngA-type G domains follow at residues 4 to 169 and 178 to 353; these read PVVA…PPTD and INVA…EQHR. GTP is bound by residues 10–17, 57–61, 120–123, 184–191, 231–235, and 296–299; these read GRPNVGKS, DTGGL, NKCE, DTAGI, and NKWD. A KH-like domain is found at 354–439; it reads RRVSTSVINE…PIRLLWRGKK (86 aa).

The protein belongs to the TRAFAC class TrmE-Era-EngA-EngB-Septin-like GTPase superfamily. EngA (Der) GTPase family. In terms of assembly, associates with the 50S ribosomal subunit.

GTPase that plays an essential role in the late steps of ribosome biogenesis. In Cyanothece sp. (strain PCC 7425 / ATCC 29141), this protein is GTPase Der.